We begin with the raw amino-acid sequence, 591 residues long: Probable anion transporter 4, chloroplastic (591 aa).

A disordered region spans residues 1 to 38 (MAMGAVLSSRTFASPLSSSGKQHPPQNNKCTCSSPPTR). The transit peptide at 1-76 (MAMGAVLSSR…LSARFHQPVV (76 aa)) directs the protein to the chloroplast. The span at 8–36 (SSRTFASPLSSSGKQHPPQNNKCTCSSPP) shows a compositional bias: polar residues. Helical transmembrane passes span 184–204 (VVLLCFFSFLLCNMDRVNMSI), 220–240 (VGLIQSSFFWGYLLTQILGGI), 249–269 (VVLGFGVVWWSIATVLTPLAA), 271–291 (IGLPFLLVMRAFMGIGEGVAM), 313–333 (LVYSGMYLGSVTGLAFSPLLI), 336–356 (FGWPSVFYAFGSLGSVWFALW), 402–422 (VWALIVSHFCHNWGTFILLTW), 440–460 (LLCVLPWLTMAIFANIGGWIA), 475–495 (KIMQSIGFLGPALFLTLLSKV), 531–551 (AGVLLGLSNTAGVLAGVFGTA), and 565–585 (VFQVAVVLYIVGTVVWNVFST).

Belongs to the major facilitator superfamily. Sodium/anion cotransporter (TC 2.A.1.14) family.

It is found in the plastid. The protein localises to the chloroplast membrane. Its function is as follows. Probable anion transporter. The polypeptide is Probable anion transporter 4, chloroplastic (PHT4;4) (Oryza sativa subsp. japonica (Rice)).